The primary structure comprises 336 residues: Glyceraldehyde-3-phosphate dehydrogenase 1 (336 aa).

Residues 12-13 (RI), Asp34, and Arg79 each bind NAD(+). Residues 149–151 (SCT), Thr180, 209–210 (TG), and Arg232 contribute to the D-glyceraldehyde 3-phosphate site. The active-site Nucleophile is the Cys150. Residue Asn314 participates in NAD(+) binding.

This sequence belongs to the glyceraldehyde-3-phosphate dehydrogenase family. As to quaternary structure, homotetramer.

The protein localises to the cytoplasm. The catalysed reaction is D-glyceraldehyde 3-phosphate + phosphate + NAD(+) = (2R)-3-phospho-glyceroyl phosphate + NADH + H(+). Its pathway is carbohydrate degradation; glycolysis; pyruvate from D-glyceraldehyde 3-phosphate: step 1/5. With respect to regulation, inhibited by koningic acid through the interaction of cysteine residues with koningic acid even at very low concentrations. This Trichoderma koningii (Hypocrea koningii) protein is Glyceraldehyde-3-phosphate dehydrogenase 1 (gpd1).